An 87-amino-acid chain; its full sequence is DNA-directed RNA polymerase subunit omega (87 aa).

It belongs to the RNA polymerase subunit omega family. In terms of assembly, the RNAP catalytic core consists of 2 alpha, 1 beta, 1 beta' and 1 omega subunit. When a sigma factor is associated with the core the holoenzyme is formed, which can initiate transcription.

The enzyme catalyses RNA(n) + a ribonucleoside 5'-triphosphate = RNA(n+1) + diphosphate. Functionally, promotes RNA polymerase assembly. Latches the N- and C-terminal regions of the beta' subunit thereby facilitating its interaction with the beta and alpha subunits. This Leifsonia xyli subsp. xyli (strain CTCB07) protein is DNA-directed RNA polymerase subunit omega.